Consider the following 344-residue polypeptide: tRNA N6-adenosine threonylcarbamoyltransferase (344 aa).

Positions 111 and 115 each coordinate Fe cation. Substrate is bound by residues 133 to 137 (VVSGG), D166, G179, D183, and N270. D298 contributes to the Fe cation binding site.

Belongs to the KAE1 / TsaD family. The cofactor is Fe(2+).

The protein resides in the cytoplasm. It carries out the reaction L-threonylcarbamoyladenylate + adenosine(37) in tRNA = N(6)-L-threonylcarbamoyladenosine(37) in tRNA + AMP + H(+). In terms of biological role, required for the formation of a threonylcarbamoyl group on adenosine at position 37 (t(6)A37) in tRNAs that read codons beginning with adenine. Is involved in the transfer of the threonylcarbamoyl moiety of threonylcarbamoyl-AMP (TC-AMP) to the N6 group of A37, together with TsaE and TsaB. TsaD likely plays a direct catalytic role in this reaction. The chain is tRNA N6-adenosine threonylcarbamoyltransferase from Persephonella marina (strain DSM 14350 / EX-H1).